A 251-amino-acid polypeptide reads, in one-letter code: Octanoyltransferase (251 aa).

The region spanning 29–216 (GVIQDTLLLL…NFGFIFKEQV (188 aa)) is the BPL/LPL catalytic domain. Substrate is bound by residues 74–81 (RGGDVTFH), 146–148 (AIG), and 159–161 (GFA). Cys177 serves as the catalytic Acyl-thioester intermediate.

Belongs to the LipB family.

It is found in the cytoplasm. The enzyme catalyses octanoyl-[ACP] + L-lysyl-[protein] = N(6)-octanoyl-L-lysyl-[protein] + holo-[ACP] + H(+). The protein operates within protein modification; protein lipoylation via endogenous pathway; protein N(6)-(lipoyl)lysine from octanoyl-[acyl-carrier-protein]: step 1/2. Its function is as follows. Catalyzes the transfer of endogenously produced octanoic acid from octanoyl-acyl-carrier-protein onto the lipoyl domains of lipoate-dependent enzymes. Lipoyl-ACP can also act as a substrate although octanoyl-ACP is likely to be the physiological substrate. The sequence is that of Octanoyltransferase from Koribacter versatilis (strain Ellin345).